Here is a 290-residue protein sequence, read N- to C-terminus: Enoyl-CoA hydratase, mitochondrial (290 aa).

Residues 1–29 (MAALRALLPRACNSLLSPVRCPEFRRFAS) constitute a mitochondrion transit peptide. 98–101 (ADIK) is a binding site for substrate. 2 positions are modified to N6-acetyllysine; alternate: K101 and K115. N6-succinyllysine; alternate occurs at positions 101 and 115. Substrate is bound at residue G141. An N6-succinyllysine modification is found at K204. K211 bears the N6-acetyllysine mark.

It belongs to the enoyl-CoA hydratase/isomerase family. Homohexamer; dimer of trimers. As to expression, detected in liver (at protein level).

Its subcellular location is the mitochondrion matrix. The catalysed reaction is a (3S)-3-hydroxyacyl-CoA = a (2E)-enoyl-CoA + H2O. It catalyses the reaction a (3E)-enoyl-CoA = a 4-saturated (2E)-enoyl-CoA. It carries out the reaction (3E)-hexenoyl-CoA = (2E)-hexenoyl-CoA. The enzyme catalyses (3S)-3-hydroxybutanoyl-CoA = (2E)-butenoyl-CoA + H2O. The catalysed reaction is 3-hydroxyisovaleryl-CoA = 3-methylbut-2-enoyl-CoA + H2O. It catalyses the reaction 3-hydroxypropanoyl-CoA = acryloyl-CoA + H2O. It carries out the reaction 3-hydroxybutanoyl-CoA = (2E)-butenoyl-CoA + H2O. The enzyme catalyses 2-methylpropenoyl-CoA + H2O = (S)-3-hydroxyisobutanoyl-CoA. The catalysed reaction is (3S)-hydroxyhexanoyl-CoA = (2E)-hexenoyl-CoA + H2O. It catalyses the reaction (3S)-hydroxydecanoyl-CoA = (2E)-decenoyl-CoA + H2O. Its pathway is lipid metabolism; fatty acid beta-oxidation. Its function is as follows. Converts unsaturated trans-2-enoyl-CoA species ((2E)-enoyl-CoA) to the corresponding 3(S)-3-hydroxyacyl-CoA species through addition of a water molecule to the double bond. Catalyzes the hydration of medium- and short-chained fatty enoyl-CoA thioesters from 4 carbons long (C4) up to C16. Has high substrate specificity for crotonyl-CoA ((2E)-butenoyl-CoA) and moderate specificity for acryloyl-CoA, 3-methylcrotonyl-CoA (3-methyl-(2E)-butenoyl-CoA) and methacrylyl-CoA ((2E)-2-methylpropenoyl-CoA). Can bind tiglyl-CoA (2-methylcrotonoyl-CoA), but hydrates only a small amount of this substrate. Plays a key role in the beta-oxidation spiral of short- and medium-chain fatty acid oxidation. At a lower rate than the hydratase reaction, catalyzes the isomerase reaction of trans-3-enoyl-CoA species (such as (3E)-hexenoyl-CoA) to trans-2-enoyl-CoA species (such as (2E)-hexenoyl-CoA), which are subsequently hydrated to 3(S)-3-hydroxyacyl-CoA species (such as (3S)-hydroxyhexanoyl-CoA). The sequence is that of Enoyl-CoA hydratase, mitochondrial from Rattus norvegicus (Rat).